Consider the following 288-residue polypeptide: Urease accessory protein UreD 1 (288 aa).

Positions 1 to 10 (MHGPLAPAPS) are enriched in pro residues. A disordered region spans residues 1–35 (MHGPLAPAPSPERLGAAPARQRSDGRIRLRVGPAR).

Belongs to the UreD family. UreD, UreF and UreG form a complex that acts as a GTP-hydrolysis-dependent molecular chaperone, activating the urease apoprotein by helping to assemble the nickel containing metallocenter of UreC. The UreE protein probably delivers the nickel.

It is found in the cytoplasm. Required for maturation of urease via the functional incorporation of the urease nickel metallocenter. The chain is Urease accessory protein UreD 1 from Methylobacterium radiotolerans (strain ATCC 27329 / DSM 1819 / JCM 2831 / NBRC 15690 / NCIMB 10815 / 0-1).